The following is a 332-amino-acid chain: DNA-directed RNA polymerase 2A (332 aa).

Catalysis depends on residues Asp-33, Lys-108, and Asp-265.

This sequence belongs to the phage and mitochondrial RNA polymerase family.

It carries out the reaction RNA(n) + a ribonucleoside 5'-triphosphate = RNA(n+1) + diphosphate. DNA-dependent RNA polymerase catalyzes the transcription of DNA into RNA using the four ribonucleoside triphosphates as substrates. This is DNA-directed RNA polymerase 2A (RPOT2-SYL) from Nicotiana tabacum (Common tobacco).